The chain runs to 168 residues: Zinc finger A20 and AN1 domain-containing stress-associated protein 1 (168 aa).

The A20-type zinc finger occupies 13 to 47 (PSEPKLCVKGCGFFGSPSNMNLCSKCYRDIRATEE). 4 residues coordinate Zn(2+): Cys19, Cys23, Cys35, and Cys38. Residues 49 to 105 (TASAKAAVEKSLNPNKPKTQPQQSQEITQGVLGSGSSSSSTRGGDSAAAPLDPPKST) form a disordered region. The segment covering 60–76 (LNPNKPKTQPQQSQEIT) has biased composition (polar residues). The segment covering 82–94 (SGSSSSSTRGGDS) has biased composition (low complexity). An AN1-type zinc finger spans residues 103–149 (KSTATRCLSCNKKVGVTGFKCRCGSTFCGTHRYPESHECQFDFKGVA). Positions 109, 112, 123, 125, 130, 133, 139, and 141 each coordinate Zn(2+).

Its function is as follows. May be involved in environmental stress response. The sequence is that of Zinc finger A20 and AN1 domain-containing stress-associated protein 1 (SAP1) from Arabidopsis thaliana (Mouse-ear cress).